A 115-amino-acid polypeptide reads, in one-letter code: Large ribosomal subunit protein bL20 (115 aa).

The protein belongs to the bacterial ribosomal protein bL20 family.

In terms of biological role, binds directly to 23S ribosomal RNA and is necessary for the in vitro assembly process of the 50S ribosomal subunit. It is not involved in the protein synthesizing functions of that subunit. The chain is Large ribosomal subunit protein bL20 from Prochlorococcus marinus (strain MIT 9303).